Reading from the N-terminus, the 1508-residue chain is uncharacterized protein (1508 aa).

The stretch at 149–267 (ARRQQWRLRR…ARSLQEHRAT (119 aa)) forms a coiled coil. 5 disordered regions span residues 248–268 (ERSEREREEAARSLQEHRATE), 345–403 (SQDW…LAGS), 536–575 (FLKKHPKDLKDTWNNGGGSLAGRTEEGKARGTLGRKGKNL), 725–754 (GLEEEDEMPHQEASGLGCRGAPEEPDSQEH), and 868–916 (EAKS…AEPW). Residues 868–881 (EAKSKESGEGDKPG) show a composition bias toward basic and acidic residues. The stretch at 972–1034 (ISRLERDNHR…KGNLGQLQKA (63 aa)) forms a coiled coil. 2 disordered regions span residues 1158 to 1186 (LAAGQTGPSTGTGNSRRGADSPPPSLVWR) and 1204 to 1246 (KEAH…EEDP). A compositionally biased stretch (polar residues) spans 1163–1172 (TGPSTGTGNS). The span at 1204–1215 (KEAHLEKEEKRP) shows a compositional bias: basic and acidic residues. Over residues 1220 to 1230 (AQGQALSSLSN) the composition is skewed to polar residues. The stretch at 1271-1302 (HQASLDEATRLQEELQAKLEELQKKQHEAKLA) forms a coiled coil.

This is an uncharacterized protein from Homo sapiens (Human).